The chain runs to 103 residues: Small ribosomal subunit protein bS18c (103 aa).

Belongs to the bacterial ribosomal protein bS18 family. Part of the 30S ribosomal subunit.

Its subcellular location is the plastid. The protein localises to the chloroplast. This Buxus microphylla (Littleleaf boxwood) protein is Small ribosomal subunit protein bS18c.